We begin with the raw amino-acid sequence, 132 residues long: Small ribosomal subunit protein uS8 (132 aa).

Belongs to the universal ribosomal protein uS8 family. As to quaternary structure, part of the 30S ribosomal subunit. Contacts proteins S5 and S12.

In terms of biological role, one of the primary rRNA binding proteins, it binds directly to 16S rRNA central domain where it helps coordinate assembly of the platform of the 30S subunit. The polypeptide is Small ribosomal subunit protein uS8 (Nocardia farcinica (strain IFM 10152)).